Reading from the N-terminus, the 952-residue chain is Eukaryotic translation initiation factor 3 subunit A (952 aa).

A PCI domain is found at 315 to 491 (HAERAGIVND…QTITFVSTPP (177 aa)). A coiled-coil region spans residues 522 to 849 (DAFAAAIAQA…RRQAEKAAAT (328 aa)). Positions 757 to 797 (EKVIKRKREEKERKLKEAREAEERKRKEEEEAAQKAEEEAR) are enriched in basic and acidic residues. Positions 757-952 (EKVIKRKREE…RGMPSTRGGA (196 aa)) are disordered. Residues 798–809 (AAAALEAEAAAA) are compositionally biased toward low complexity. The segment covering 810 to 844 (EQRRAEREAQRQSDLERIRAQQEREEEALRRRQAE) has biased composition (basic and acidic residues). Composition is skewed to low complexity over residues 856 to 878 (RPPA…GGPS) and 893 to 918 (GAPV…SNGP).

This sequence belongs to the eIF-3 subunit A family. In terms of assembly, component of the eukaryotic translation initiation factor 3 (eIF-3) complex.

Its subcellular location is the cytoplasm. RNA-binding component of the eukaryotic translation initiation factor 3 (eIF-3) complex, which is involved in protein synthesis of a specialized repertoire of mRNAs and, together with other initiation factors, stimulates binding of mRNA and methionyl-tRNAi to the 40S ribosome. The eIF-3 complex specifically targets and initiates translation of a subset of mRNAs involved in cell proliferation. In Cryptococcus neoformans var. neoformans serotype D (strain B-3501A) (Filobasidiella neoformans), this protein is Eukaryotic translation initiation factor 3 subunit A.